A 444-amino-acid chain; its full sequence is Magnesium transporter MRS2-F (444 aa).

Residues 128–155 are disordered; it reads FTDMEGESSAVTSPFPALTSTTPNELEM. Polar residues predominate over residues 145-155; it reads LTSTTPNELEM. A coiled-coil region spans residues 195 to 258; it reads VCLESACRSL…QKVRDELEHL (64 aa). A helical membrane pass occupies residues 370 to 390; it reads GVMLSTATVVITAGVAVVGLF. The Required for magnesium transport activity motif lies at 391-393; that stretch reads GMN. A helical membrane pass occupies residues 415 to 435; the sequence is FWETTLGTIAGCTVMYIVAMG.

This sequence belongs to the CorA metal ion transporter (MIT) (TC 1.A.35.5) family.

It localises to the membrane. In terms of biological role, magnesium transporter that may mediate the influx of magnesium. This chain is Magnesium transporter MRS2-F (MRS2-F), found in Oryza sativa subsp. indica (Rice).